Reading from the N-terminus, the 96-residue chain is Acylphosphatase (96 aa).

Positions 4 to 91 constitute an Acylphosphatase-like domain; it reads RVHVYVKGKV…GEFDDFRILY (88 aa). Residues Arg-19 and Asn-37 contribute to the active site.

It belongs to the acylphosphatase family.

The enzyme catalyses an acyl phosphate + H2O = a carboxylate + phosphate + H(+). The chain is Acylphosphatase (acyP) from Syntrophus aciditrophicus (strain SB).